A 648-amino-acid polypeptide reads, in one-letter code: Bifunctional protein TilS/HprT (648 aa).

ATP is bound at residue 29 to 34 (SGGPDS). Asp-627 lines the Mg(2+) pocket.

The protein in the N-terminal section; belongs to the tRNA(Ile)-lysidine synthase family. In the C-terminal section; belongs to the purine/pyrimidine phosphoribosyltransferase family. Requires Mg(2+) as cofactor.

It is found in the cytoplasm. It catalyses the reaction IMP + diphosphate = hypoxanthine + 5-phospho-alpha-D-ribose 1-diphosphate. The catalysed reaction is GMP + diphosphate = guanine + 5-phospho-alpha-D-ribose 1-diphosphate. It carries out the reaction cytidine(34) in tRNA(Ile2) + L-lysine + ATP = lysidine(34) in tRNA(Ile2) + AMP + diphosphate + H(+). Functionally, ligates lysine onto the cytidine present at position 34 of the AUA codon-specific tRNA(Ile) that contains the anticodon CAU, in an ATP-dependent manner. Cytidine is converted to lysidine, thus changing the amino acid specificity of the tRNA from methionine to isoleucine. This Listeria innocua serovar 6a (strain ATCC BAA-680 / CLIP 11262) protein is Bifunctional protein TilS/HprT (tilS/hprT).